We begin with the raw amino-acid sequence, 695 residues long: UvrABC system protein B (695 aa).

Residues 45 to 434 (EGIEDGLSFQ…QVVEQVVRPT (390 aa)) enclose the Helicase ATP-binding domain. An ATP-binding site is contributed by 58–65 (GVTGSGKT). Residues 111–134 (YYDYYQPEAYVPQRDLFIEKDSSI) carry the Beta-hairpin motif. Residues 449–602 (QVDDLLSEIN…QMAFNEANGI (154 aa)) enclose the Helicase C-terminal domain. The UVR domain occupies 646-681 (SKEIKRLEKLMMDHAKNLEFEKAAQVRDQLAKLKAQ).

This sequence belongs to the UvrB family. As to quaternary structure, forms a heterotetramer with UvrA during the search for lesions. Interacts with UvrC in an incision complex.

Its subcellular location is the cytoplasm. In terms of biological role, the UvrABC repair system catalyzes the recognition and processing of DNA lesions. A damage recognition complex composed of 2 UvrA and 2 UvrB subunits scans DNA for abnormalities. Upon binding of the UvrA(2)B(2) complex to a putative damaged site, the DNA wraps around one UvrB monomer. DNA wrap is dependent on ATP binding by UvrB and probably causes local melting of the DNA helix, facilitating insertion of UvrB beta-hairpin between the DNA strands. Then UvrB probes one DNA strand for the presence of a lesion. If a lesion is found the UvrA subunits dissociate and the UvrB-DNA preincision complex is formed. This complex is subsequently bound by UvrC and the second UvrB is released. If no lesion is found, the DNA wraps around the other UvrB subunit that will check the other stand for damage. This Cupriavidus pinatubonensis (strain JMP 134 / LMG 1197) (Cupriavidus necator (strain JMP 134)) protein is UvrABC system protein B.